The primary structure comprises 160 residues: 6,7-dimethyl-8-ribityllumazine synthase (160 aa).

Residues W31, 65–67 (SFE), and 89–91 (CVV) each bind 5-amino-6-(D-ribitylamino)uracil. 94–95 (DT) serves as a coordination point for (2S)-2-hydroxy-3-oxobutyl phosphate. H97 acts as the Proton donor in catalysis. F122 lines the 5-amino-6-(D-ribitylamino)uracil pocket. (2S)-2-hydroxy-3-oxobutyl phosphate is bound at residue R136.

It belongs to the DMRL synthase family.

It carries out the reaction (2S)-2-hydroxy-3-oxobutyl phosphate + 5-amino-6-(D-ribitylamino)uracil = 6,7-dimethyl-8-(1-D-ribityl)lumazine + phosphate + 2 H2O + H(+). It functions in the pathway cofactor biosynthesis; riboflavin biosynthesis; riboflavin from 2-hydroxy-3-oxobutyl phosphate and 5-amino-6-(D-ribitylamino)uracil: step 1/2. Its function is as follows. Catalyzes the formation of 6,7-dimethyl-8-ribityllumazine by condensation of 5-amino-6-(D-ribitylamino)uracil with 3,4-dihydroxy-2-butanone 4-phosphate. This is the penultimate step in the biosynthesis of riboflavin. This chain is 6,7-dimethyl-8-ribityllumazine synthase, found in Parabacteroides distasonis (strain ATCC 8503 / DSM 20701 / CIP 104284 / JCM 5825 / NCTC 11152).